Reading from the N-terminus, the 434-residue chain is MSRPSYASATKTYFHNRLVTGPDRAYFIVAMILMLIPEIPFLIFVCPLFEEWITAAIYPVSIYFWIASYIFLIQTAYTDPGIIPRGIYNDDIFAPDHRQPLFKKITVKDTKQEIKWCETCCLYRPPRANHCGICNNCVERFDHHCPWVGNCIGRRNYQTFLYFLYSLGFLCIWIMGFCVAHICIESARYRDNHPSASSAKVFQEGMNKSHYISDYNYSLWVSRFNSNPYRKSAFANFIEAFCPPRYPSFYKYTLDHEKELTTIPTPNNINGNNNNSINNNNNNNNNNNNNNNNNNNNNNNNNNINNGNSGGTTNNGYTPPISPPQMLQRQSSTIRYSLDNLRTSSNSSLGNFNNLKSSRDLNLSTISEDKPKNLSNSNNNNNTNNKNTSEDNNHSSGSDFGGDEENNEDDFKSDNDKEINSSSLSLNHELQVNV.

2 consecutive transmembrane segments (helical) span residues 25–45 (AYFI…LIFV) and 53–73 (ITAA…IFLI). One can recognise a DHHC domain in the interval 115-165 (KWCETCCLYRPPRANHCGICNNCVERFDHHCPWVGNCIGRRNYQTFLYFLY). C145 serves as the catalytic S-palmitoyl cysteine intermediate. A helical transmembrane segment spans residues 160–180 (FLYFLYSLGFLCIWIMGFCVA). 9 N-linked (GlcNAc...) asparagine glycosylation sites follow: N207, N216, N274, N346, N362, N373, N381, N387, and N393. A disordered region spans residues 262 to 330 (TIPTPNNING…ISPPQMLQRQ (69 aa)). Residues 267 to 316 (NNINGNNNNSINNNNNNNNNNNNNNNNNNNNNNNNNNINNGNSGGTTNNG) are compositionally biased toward low complexity. The tract at residues 365 to 434 (TISEDKPKNL…SLNHELQVNV (70 aa)) is disordered. Residues 373-387 (NLSNSNNNNNTNNKN) are compositionally biased toward low complexity. Positions 409–419 (DDFKSDNDKEI) are enriched in basic and acidic residues. Residue N420 is glycosylated (N-linked (GlcNAc...) asparagine). Residues 420–434 (NSSSLSLNHELQVNV) show a composition bias toward polar residues.

It belongs to the DHHC palmitoyltransferase family.

The protein localises to the membrane. The catalysed reaction is L-cysteinyl-[protein] + hexadecanoyl-CoA = S-hexadecanoyl-L-cysteinyl-[protein] + CoA. The protein is Putative ZDHHC-type palmitoyltransferase 1 of Dictyostelium discoideum (Social amoeba).